Here is a 48-residue protein sequence, read N- to C-terminus: MKRTYQPSKLKRAKTHGFLARMATASGRKVLKLRRKKQRAQLTVSSER.

It belongs to the bacterial ribosomal protein bL34 family.

The protein is Large ribosomal subunit protein bL34 (rpmH) of Mycoplasma pneumoniae (strain ATCC 29342 / M129 / Subtype 1) (Mycoplasmoides pneumoniae).